Consider the following 884-residue polypeptide: Protein P (884 aa).

Positions 1-184 (MHPFSRLFRN…GKPYSWEHRQ (184 aa)) are terminal protein domain (TP). The segment at 185 to 387 (LVQHNGQQHK…YCIHHIVSSL (203 aa)) is spacer. The interval 299 to 345 (RNSGHTTWFSSASNSNKSRSREKAYSSNSTSKRYSPPLNYEKSDFSS) is disordered. Positions 388-729 (DDWGPCTVTG…YEELWPVVRQ (342 aa)) are polymerase/reverse transcriptase domain (RT). The 242-residue stretch at 398–639 (DVTIKSPRTP…NHLHFMGYVI (242 aa)) folds into the Reverse transcriptase domain. The Mg(2+) site is built by Asp-470, Asp-590, and Asp-591.

This sequence belongs to the hepadnaviridae P protein family.

The enzyme catalyses DNA(n) + a 2'-deoxyribonucleoside 5'-triphosphate = DNA(n+1) + diphosphate. The catalysed reaction is Endonucleolytic cleavage to 5'-phosphomonoester.. With respect to regulation, activated by host HSP70 and HSP40 in vitro to be able to bind the epsilon loop of the pgRNA. Because deletion of the RNase H region renders the protein partly chaperone-independent, the chaperones may be needed indirectly to relieve occlusion of the RNA-binding site by this domain. Inhibited by several reverse-transcriptase inhibitors: Lamivudine, Adefovir and Entecavir. Multifunctional enzyme that converts the viral RNA genome into dsDNA in viral cytoplasmic capsids. This enzyme displays a DNA polymerase activity that can copy either DNA or RNA templates, and a ribonuclease H (RNase H) activity that cleaves the RNA strand of RNA-DNA heteroduplexes in a partially processive 3'- to 5'-endonucleasic mode. Neo-synthesized pregenomic RNA (pgRNA) are encapsidated together with the P protein, and reverse-transcribed inside the nucleocapsid. Initiation of reverse-transcription occurs first by binding the epsilon loop on the pgRNA genome, and is initiated by protein priming, thereby the 5'-end of (-)DNA is covalently linked to P protein. Partial (+)DNA is synthesized from the (-)DNA template and generates the relaxed circular DNA (RC-DNA) genome. After budding and infection, the RC-DNA migrates in the nucleus, and is converted into a plasmid-like covalently closed circular DNA (cccDNA). The activity of P protein does not seem to be necessary for cccDNA generation, and is presumably released from (+)DNA by host nuclear DNA repair machinery. This Marmota monax (Woodchuck) protein is Protein P.